Consider the following 211-residue polypeptide: Protein N-terminal glutamine amidohydrolase (211 aa).

Residues C24, H78, and D94 contribute to the active site.

It belongs to the NTAQ1 family. In terms of assembly, monomer.

The enzyme catalyses N-terminal L-glutaminyl-[protein] + H2O = N-terminal L-glutamyl-[protein] + NH4(+). Mediates the side-chain deamidation of N-terminal glutamine residues to glutamate, an important step in N-end rule pathway of protein degradation. Conversion of the resulting N-terminal glutamine to glutamate renders the protein susceptible to arginylation, polyubiquitination and degradation as specified by the N-end rule. Does not act on substrates with internal or C-terminal glutamine and does not act on non-glutamine residues in any position. The sequence is that of Protein N-terminal glutamine amidohydrolase (tun) from Anopheles gambiae (African malaria mosquito).